A 134-amino-acid polypeptide reads, in one-letter code: DNA-directed RNA polymerase subunit omega (134 aa).

This sequence belongs to the RNA polymerase subunit omega family. As to quaternary structure, the RNAP catalytic core consists of 2 alpha, 1 beta, 1 beta' and 1 omega subunit. When a sigma factor is associated with the core the holoenzyme is formed, which can initiate transcription.

It catalyses the reaction RNA(n) + a ribonucleoside 5'-triphosphate = RNA(n+1) + diphosphate. Functionally, promotes RNA polymerase assembly. Latches the N- and C-terminal regions of the beta' subunit thereby facilitating its interaction with the beta and alpha subunits. This chain is DNA-directed RNA polymerase subunit omega, found in Brucella anthropi (strain ATCC 49188 / DSM 6882 / CCUG 24695 / JCM 21032 / LMG 3331 / NBRC 15819 / NCTC 12168 / Alc 37) (Ochrobactrum anthropi).